We begin with the raw amino-acid sequence, 555 residues long: MFS-type transporter VdtG (555 aa).

Positions 1-20 (MNGNGTADKPGPPGGKPFGP) are disordered. An N-linked (GlcNAc...) asparagine glycan is attached at N4. 3 helical membrane-spanning segments follow: residues 30-50 (TGFK…LTAL), 71-91 (DIGW…LLFG), and 101-121 (WVFL…GAAP). N-linked (GlcNAc...) asparagine glycosylation occurs at N122. Transmembrane regions (helical) follow at residues 132-152 (IAGL…FFTV) and 162-182 (GIAG…GGGF). The N-linked (GlcNAc...) asparagine glycan is linked to N185. A run of 4 helical transmembrane segments spans residues 190-210 (WCFY…LLFL), 232-252 (LGNL…QWGG), 262-282 (IVAL…VQLW), and 304-324 (AFTI…PIWF). An N-linked (GlcNAc...) asparagine glycan is attached at N329. 5 helical membrane passes run 337-357 (VMML…GFII), 364-384 (TPFM…LTTF), 393-413 (WIGY…QASL), 425-445 (PIGI…FLAV), and 497-517 (LMDV…AAAF). The interval 528–555 (AAGPGGPGGPGGPGGPGGPEGLRGGNKV) is disordered. Gly residues predominate over residues 530 to 555 (GPGGPGGPGGPGGPGGPEGLRGGNKV).

This sequence belongs to the major facilitator superfamily. TCR/Tet family.

The protein resides in the endoplasmic reticulum membrane. Its function is as follows. MFS-type transporter; part of the gene cluster that mediates the biosynthesis of viriditoxin, one of the 'classical' secondary metabolites produced by fungi and that has antibacterial activity. Is not essential for viriditoxin production. This Byssochlamys spectabilis (Paecilomyces variotii) protein is MFS-type transporter VdtG.